A 389-amino-acid polypeptide reads, in one-letter code: Liposome tubulation protein MamY (389 aa).

Residues 1-31 (MAIAAIMGDVLMLMGFNKAAFGKLNSASRAA) lie on the Cytoplasmic side of the membrane. The chain crosses the membrane as a helical span at residues 32–52 (LIGAVIWAVLSIVYLTIFNGW). Residues 53–62 (KNLFTMLPHE) lie on the Lumenal side of the membrane. The helical transmembrane segment at 63–83 (FFIVLLSIALPIGLTVLILML) threads the bilayer. Residues 84 to 389 (SRIVKSVDTL…TETAPDSGMD (306 aa)) are Cytoplasmic-facing.

Belongs to the magnetosome MamY family.

The protein resides in the magnetosome membrane. In terms of biological role, causes tubulation when added to magnetosome-derived liposomes, binds liposomes; may be involved in constriction of the cell inner membrane to form mature magnetosomes. Binds preferentially to cardiolipin, a component of bacterial membranes, with very poor to no binding of other tested (phospho)lipids. Addition of cardiolipin to magnetosome-derived lipids increases tubulation. May function with MamX, MamZ amd Mms6. The polypeptide is Liposome tubulation protein MamY (Paramagnetospirillum magneticum (strain ATCC 700264 / AMB-1) (Magnetospirillum magneticum)).